Consider the following 264-residue polypeptide: Matrilysin (264 aa).

The first 17 residues, 1 to 17, serve as a signal peptide directing secretion; sequence MQLTLFCFVCLLPGHLA. Residues 18–94 constitute a propeptide, activation peptide; that stretch reads LPLSQEAGDV…PRCGVPDVAE (77 aa). The short motif at 85–92 is the Cysteine switch element; that stretch reads PRCGVPDV. Position 87 (Cys87) interacts with Zn(2+). A Ca(2+)-binding site is contributed by Asp153. His163 and Asp165 together coordinate Zn(2+). Ca(2+) is bound by residues Asp170, Gly171, Gly173, and Thr175. Position 178 (His178) interacts with Zn(2+). Residues Gly185, Gly187, and Asp189 each contribute to the Ca(2+) site. Residue His191 participates in Zn(2+) binding. Positions 193 and 196 each coordinate Ca(2+). His214 lines the Zn(2+) pocket. Glu215 is a catalytic residue. Positions 218 and 224 each coordinate Zn(2+).

Belongs to the peptidase M10A family. The cofactor is Ca(2+). Zn(2+) serves as cofactor. Expressed in the intestinal epithelium (at protein level).

It localises to the secreted. The protein localises to the extracellular space. The protein resides in the extracellular matrix. The enzyme catalyses Cleavage of 14-Ala-|-Leu-15 and 16-Tyr-|-Leu-17 in B chain of insulin. No action on collagen types I, II, IV, V. Cleaves gelatin chain alpha2(I) &gt; alpha1(I).. Degrades casein, gelatins of types I, III, IV, and V, and fibronectin. Activates procollagenase. Its function is as follows. May play a role in tissue reorganization. This chain is Matrilysin (Mmp7), found in Mus musculus (Mouse).